The following is a 406-amino-acid chain: MSKWKDVKKVVLAYSGGLDTSIILKWLQTELGAEVVTFTADLGQGEELEPARKKAEMLGIKEIFIEDVREEFVRDFVFPMFRANAVYEGVYLLGTSIARPLISKHLIEIARKTGADAIAHGATGKGNDQVRFELSAYALNPDIKIIAPWRDWSFKSRTHLLEFAEQHQIPVAKDKKGEAPFSVDANLLHSSSEGKVLEDPAVEAPEYVHMRTISPETAPDKATIIKIGFEKGDAVSINGERLSPATLLAKLNDYGRDNGIGRLDLVENRFVGMKSRGVYETPGGTILLAAHRAIESITLDRGAAHLKDELMPRYAELIYYGFWFSPEREMLQAAIDHSQRHVEGEVTLKLYKGNVMVIGRESDKSLYSDKLVTFEDDQGAYDQKDAAGFIKLNALRLRTLAARDRK.

ATP is bound by residues 13 to 21 (AYSGGLDTS) and A40. L-citrulline contacts are provided by Y91 and S96. G121 serves as a coordination point for ATP. L-aspartate-binding residues include T123, N127, and D128. Position 127 (N127) interacts with L-citrulline. R131, S182, S191, E267, and Y279 together coordinate L-citrulline.

Belongs to the argininosuccinate synthase family. Type 1 subfamily. As to quaternary structure, homotetramer.

The protein resides in the cytoplasm. It catalyses the reaction L-citrulline + L-aspartate + ATP = 2-(N(omega)-L-arginino)succinate + AMP + diphosphate + H(+). It participates in amino-acid biosynthesis; L-arginine biosynthesis; L-arginine from L-ornithine and carbamoyl phosphate: step 2/3. The chain is Argininosuccinate synthase from Brucella anthropi (strain ATCC 49188 / DSM 6882 / CCUG 24695 / JCM 21032 / LMG 3331 / NBRC 15819 / NCTC 12168 / Alc 37) (Ochrobactrum anthropi).